Consider the following 27-residue polypeptide: Alpha-amylase/trypsin inhibitor CM17 (27 aa).

This sequence belongs to the protease inhibitor I6 (cereal trypsin/alpha-amylase inhibitor) family. Developing endosperm.

Its subcellular location is the secreted. In terms of biological role, alpha-amylase/trypsin inhibitor. It could be involved in insect defense mechanisms. The polypeptide is Alpha-amylase/trypsin inhibitor CM17 (Triticum aestivum (Wheat)).